The primary structure comprises 360 residues: Putative F-box protein At5g55150 (360 aa).

In terms of domain architecture, F-box spans 6–54 (SSWSEFLPELLNTVFHNLNDARDILNCATVCSSWKDSSSAVYYSRTFSP).

This Arabidopsis thaliana (Mouse-ear cress) protein is Putative F-box protein At5g55150.